Consider the following 468-residue polypeptide: ATP synthase subunit beta 1 (468 aa).

155–162 (GGAGVGKT) is an ATP binding site.

Belongs to the ATPase alpha/beta chains family. In terms of assembly, F-type ATPases have 2 components, CF(1) - the catalytic core - and CF(0) - the membrane proton channel. CF(1) has five subunits: alpha(3), beta(3), gamma(1), delta(1), epsilon(1). CF(0) has three main subunits: a(1), b(2) and c(9-12). The alpha and beta chains form an alternating ring which encloses part of the gamma chain. CF(1) is attached to CF(0) by a central stalk formed by the gamma and epsilon chains, while a peripheral stalk is formed by the delta and b chains.

It localises to the cell inner membrane. The enzyme catalyses ATP + H2O + 4 H(+)(in) = ADP + phosphate + 5 H(+)(out). In terms of biological role, produces ATP from ADP in the presence of a proton gradient across the membrane. The catalytic sites are hosted primarily by the beta subunits. The polypeptide is ATP synthase subunit beta 1 (Syntrophotalea carbinolica (strain DSM 2380 / NBRC 103641 / GraBd1) (Pelobacter carbinolicus)).